The following is a 105-amino-acid chain: Large ribosomal subunit protein uL24 (105 aa).

This sequence belongs to the universal ribosomal protein uL24 family. In terms of assembly, part of the 50S ribosomal subunit.

One of two assembly initiator proteins, it binds directly to the 5'-end of the 23S rRNA, where it nucleates assembly of the 50S subunit. Functionally, one of the proteins that surrounds the polypeptide exit tunnel on the outside of the subunit. This Mycolicibacterium smegmatis (strain ATCC 700084 / mc(2)155) (Mycobacterium smegmatis) protein is Large ribosomal subunit protein uL24.